We begin with the raw amino-acid sequence, 275 residues long: Spermidine/putrescine transport system permease protein PotB (275 aa).

The chain crosses the membrane as a helical span at residues 1–21 (MIVTIVGWLVLFVFLPNLMII). Residues 22–60 (GTSFLTRDDASFVKMVFTLDNYTRLLDPLYFEVLLHSLN) are Periplasmic-facing. Residues 55-261 (LLHSLNMALI…IVMGLMLLVY (207 aa)) enclose the ABC transmembrane type-1 domain. A helical membrane pass occupies residues 61-81 (MALIATLACLVLGYPFAWFLA). The Cytoplasmic portion of the chain corresponds to 82-89 (KLPHKVRP). The chain crosses the membrane as a helical span at residues 90-110 (LLLFLLIVPFWTNSLIRIYGL). Over 111–135 (KIFLSTKGYLNEFLLWLGVIDTPIR) the chain is Periplasmic. Residues 136 to 156 (IMFTPSAVIIGLVYILLPFMV) form a helical membrane-spanning segment. Residues 157–187 (MPLYSSIEKLDKPLLEAARDLGASKLQTFIR) lie on the Cytoplasmic side of the membrane. A helical membrane pass occupies residues 188–208 (IIIPLTMPGIIAGCLLVMLPA). Residues 209–241 (MGLFYVSDLMGGAKNLLIGNVIKVQFLNIRDWP) are Periplasmic-facing. A helical transmembrane segment spans residues 242–262 (FGAATSITLTIVMGLMLLVYW). Residues 263-275 (RASRLLNKKVELE) lie on the Cytoplasmic side of the membrane.

This sequence belongs to the binding-protein-dependent transport system permease family. CysTW subfamily.

It is found in the cell inner membrane. Its function is as follows. Required for the activity of the bacterial periplasmic transport system of putrescine and spermidine. The chain is Spermidine/putrescine transport system permease protein PotB (potB) from Escherichia coli (strain K12).